We begin with the raw amino-acid sequence, 505 residues long: Peroxisome proliferator-activated receptor gamma (505 aa).

Residue threonine 84 is glycosylated (O-linked (GlcNAc) threonine). At serine 112 the chain carries Phosphoserine; by MAPK. The nuclear receptor DNA-binding region spans 136–210; the sequence is AIECRVCGDK…VGMSHNAIRF (75 aa). NR C4-type zinc fingers lie at residues 139–159 and 176–198; these read CRVCGDKASGFHYGVHACEGC and CDLNCRIHKKSRNKCQYCRFQKC. Residues 205 to 280 are interaction with FAM120B; the sequence is HNAIRFGRMP…DKSPFVIYDM (76 aa). The 266-residue stretch at 238 to 503 folds into the NR LBD domain; that stretch reads DLRALAKHLY…HPLLQEIYKD (266 aa). A Glycyl lysine isopeptide (Lys-Gly) (interchain with G-Cter in ubiquitin) cross-link involves residue lysine 252. The 9aaTAD signature appears at 495 to 503; it reads PLLQEIYKD.

It belongs to the nuclear hormone receptor family. NR1 subfamily. Interacts with FOXO1 (acetylated form). Heterodimer with other nuclear receptors, such as RXRA. The heterodimer with the retinoic acid receptor RXRA is called adipocyte-specific transcription factor ARF6. Interacts with NCOA6 coactivator, leading to a strong increase in transcription of target genes. Interacts with coactivator PPARBP, leading to a mild increase in transcription of target genes. Interacts with NOCA7 in a ligand-inducible manner. Interacts with NCOA1 and NCOA2 LXXLL motifs. Interacts with ASXL1, ASXL2, DNTTIP2, FAM120B, MAP2K1/MEK1, NR0B2, PDPK1, PRDM16, PRMT2 and TGFB1I1. Interacts (when activated by agonist) with PPP5C. Interacts with HELZ2 and THRAP3; the interaction stimulates the transcriptional activity of PPARG. Interacts with PER2, the interaction is ligand dependent and blocks PPARG recruitment to target promoters. Interacts with NOCT. Interacts with ACTN4. Interacts (when in the liganded conformation) with GPS2. Interacts with CRY1 and CRY2 in a ligand-dependent manner. In the absence of hormonal ligand, interacts with TACC1. In macrophages, interacts with PAQR3 and STUB1; the interactions promote PPARG poylubiquitination and STUB1-mediated degradation. Post-translationally, O-GlcNAcylation at Thr-84 reduces transcriptional activity in adipocytes. Phosphorylated at basal conditions and dephosphorylated when treated with the ligand. May be dephosphorylated by PPP5C. The phosphorylated form may be inactive and dephosphorylation induces adipogenic activity. In terms of processing, ubiquitinated by E3 ubiquitin-protein ligase complex containing FBXO9; leading to proteasomal degradation. Ubiquitinated at Lys-252 by TRIM55 leading to proteasomal degradation. Ubiquitinated by E3 ubiquitin-protein ligase STUB1/CHIP; leading to proteasomal degradation. Highest expression in adipose tissue. Lower in liver, heart, kidney, stomach, duodenum and colon.

The protein resides in the nucleus. It localises to the cytoplasm. With respect to regulation, PDPK1 activates its transcriptional activity independently of its kinase activity. Nuclear receptor that binds peroxisome proliferators such as hypolipidemic drugs and fatty acids. Once activated by a ligand, the nuclear receptor binds to DNA specific PPAR response elements (PPRE) and modulates the transcription of its target genes, such as acyl-CoA oxidase. It therefore controls the peroxisomal beta-oxidation pathway of fatty acids. Key regulator of adipocyte differentiation and glucose homeostasis. ARF6 acts as a key regulator of the tissue-specific adipocyte P2 (aP2) enhancer. Acts as a critical regulator of gut homeostasis by suppressing NF-kappa-B-mediated pro-inflammatory responses. Plays a role in the regulation of cardiovascular circadian rhythms by regulating the transcription of BMAL1 in the blood vessels. This is Peroxisome proliferator-activated receptor gamma (PPARG) from Macaca mulatta (Rhesus macaque).